The primary structure comprises 306 residues: Elongation factor Ts (306 aa).

Residues 80 to 83 (TDFV) are involved in Mg(2+) ion dislocation from EF-Tu.

The protein belongs to the EF-Ts family.

Its subcellular location is the cytoplasm. In terms of biological role, associates with the EF-Tu.GDP complex and induces the exchange of GDP to GTP. It remains bound to the aminoacyl-tRNA.EF-Tu.GTP complex up to the GTP hydrolysis stage on the ribosome. In Clostridium kluyveri (strain NBRC 12016), this protein is Elongation factor Ts.